The primary structure comprises 71 residues: Translation initiation factor IF-1 (71 aa).

The S1-like domain occupies 1–71 (MAKQSAIEQD…LSKARITYRY (71 aa)).

The protein belongs to the IF-1 family. Component of the 30S ribosomal translation pre-initiation complex which assembles on the 30S ribosome in the order IF-2 and IF-3, IF-1 and N-formylmethionyl-tRNA(fMet); mRNA recruitment can occur at any time during PIC assembly.

It localises to the cytoplasm. Functionally, one of the essential components for the initiation of protein synthesis. Stabilizes the binding of IF-2 and IF-3 on the 30S subunit to which N-formylmethionyl-tRNA(fMet) subsequently binds. Helps modulate mRNA selection, yielding the 30S pre-initiation complex (PIC). Upon addition of the 50S ribosomal subunit IF-1, IF-2 and IF-3 are released leaving the mature 70S translation initiation complex. The sequence is that of Translation initiation factor IF-1 from Flavobacterium psychrophilum (strain ATCC 49511 / DSM 21280 / CIP 103535 / JIP02/86).